The sequence spans 80 residues: Acyl carrier protein (80 aa).

A Carrier domain is found at 4–79 (EDIFSKVKDI…DAVDFIASKA (76 aa)). O-(pantetheine 4'-phosphoryl)serine is present on Ser39.

It belongs to the acyl carrier protein (ACP) family. Post-translationally, 4'-phosphopantetheine is transferred from CoA to a specific serine of apo-ACP by AcpS. This modification is essential for activity because fatty acids are bound in thioester linkage to the sulfhydryl of the prosthetic group.

Its subcellular location is the cytoplasm. Its pathway is lipid metabolism; fatty acid biosynthesis. In terms of biological role, carrier of the growing fatty acid chain in fatty acid biosynthesis. This is Acyl carrier protein from Synechococcus elongatus (strain ATCC 33912 / PCC 7942 / FACHB-805) (Anacystis nidulans R2).